Reading from the N-terminus, the 136-residue chain is MSLVFNLVKRLQLILLSLVVGGLAVAFLSNPAAAETYIVKMGSDKAQLVYDPPSLTINQGDTVQWVNNKVYPHNVVFDKVPGGDAALAAKLSHKALLTAPKQVVESAFVDVPPGEYTYYCTPHRGAGMVGKIIVNG.

Residues Met1–Ala34 form the signal peptide. A Plastocyanin-like domain is found at Glu35–Gly136. 4 residues coordinate Cu cation: His73, Cys120, His123, and Met128.

It belongs to the plastocyanin family. Requires Cu(2+) as cofactor.

Its subcellular location is the cellular thylakoid membrane. In terms of biological role, participates in electron transfer between P700 and the cytochrome b6-f complex in photosystem I. In Synechococcus sp. (strain JA-2-3B'a(2-13)) (Cyanobacteria bacterium Yellowstone B-Prime), this protein is Plastocyanin.